The chain runs to 263 residues: Regulatory protein RecX (263 aa).

The protein belongs to the RecX family.

It is found in the cytoplasm. Its function is as follows. Modulates RecA activity. This chain is Regulatory protein RecX, found in Bacillus licheniformis (strain ATCC 14580 / DSM 13 / JCM 2505 / CCUG 7422 / NBRC 12200 / NCIMB 9375 / NCTC 10341 / NRRL NRS-1264 / Gibson 46).